Reading from the N-terminus, the 105-residue chain is Small ribosomal subunit protein uS14m (105 aa).

This sequence belongs to the universal ribosomal protein uS14 family. Component of the mitochondrial small ribosomal subunit (mt-SSU). Mature yeast 74S mitochondrial ribosomes consist of a small (37S) and a large (54S) subunit. The 37S small subunit contains a 15S ribosomal RNA (15S mt-rRNA) and at least 32 different proteins. The 54S large subunit contains a 21S rRNA (21S mt-rRNA) and at least 45 different proteins.

The protein localises to the mitochondrion. Its function is as follows. Component of the mitochondrial ribosome (mitoribosome), a dedicated translation machinery responsible for the synthesis of mitochondrial genome-encoded proteins, including at least some of the essential transmembrane subunits of the mitochondrial respiratory chain. The mitoribosomes are attached to the mitochondrial inner membrane and translation products are cotranslationally integrated into the membrane. The polypeptide is Small ribosomal subunit protein uS14m (mrp2) (Schizosaccharomyces pombe (strain 972 / ATCC 24843) (Fission yeast)).